The sequence spans 1347 residues: DExH-box ATP-dependent RNA helicase DExH11 (1347 aa).

The tract at residues 263 to 291 (ELEGDDHTAGSESPKAEAEPDAKASISNE) is disordered. The segment covering 267-284 (DDHTAGSESPKAEAEPDA) has biased composition (basic and acidic residues). The 156-residue stretch at 369–524 (ICCLEKGESV…WIGRTKQKEI (156 aa)) folds into the Helicase ATP-binding domain. Residue 382–389 (AHTSAGKT) participates in ATP binding. The DEVH box motif lies at 472-475 (DEVH). The disordered stretch occupies residues 566 to 625 (SQKKKNSNAVSVAPKQQMGSSAHQDGSKSQKHEAHSRGKQNKHSSVKDVGKSSYSGNSQN). The span at 590-601 (DGSKSQKHEAHS) shows a compositional bias: basic and acidic residues. A Helicase C-terminal domain is found at 673–838 (DLTSSSEKSE…LTYIMILHLL (166 aa)).

It belongs to the DExH box helicase family. SKI2 subfamily. As to quaternary structure, component of the cytoplasmic SKI complex, which consists of SKI2, SKI3 and VIP3/SKI8. Expressed in vascular tissues of leaves and roots of young plants.

It is found in the cytoplasm. It carries out the reaction ATP + H2O = ADP + phosphate + H(+). Its function is as follows. Component of the SKI complex which is thought to be involved in exosome-mediated RNA decay and associates with transcriptionally active genes in a manner dependent on PAF1 complex (PAF1C). Involved in the regulation of potassium deprivation stress response. The sequence is that of DExH-box ATP-dependent RNA helicase DExH11 from Arabidopsis thaliana (Mouse-ear cress).